A 353-amino-acid chain; its full sequence is Probable peptidoglycan glycosyltransferase FtsW (353 aa).

8 consecutive transmembrane segments (helical) span residues 26–46, 53–73, 115–135, 137–157, 162–182, 242–262, 288–308, and 314–334; these read IFYFFLIFLLSFILLRIPMSF, LILIISIFLLTIVLLIGKSVH, FWGFLKPITIIIIQSVLLLAE, DLGTVIVLFLTTLSVLFLSGV, FFIIIFFVTLIITALVLFEPY, IIGEELGYIGCFLILLMIFFI, IGLWFSFQTLINIGAVTGILP, and LPLISYGGSSLIVNLMAICIL.

It belongs to the SEDS family. FtsW subfamily.

It is found in the cell inner membrane. It catalyses the reaction [GlcNAc-(1-&gt;4)-Mur2Ac(oyl-L-Ala-gamma-D-Glu-L-Lys-D-Ala-D-Ala)](n)-di-trans,octa-cis-undecaprenyl diphosphate + beta-D-GlcNAc-(1-&gt;4)-Mur2Ac(oyl-L-Ala-gamma-D-Glu-L-Lys-D-Ala-D-Ala)-di-trans,octa-cis-undecaprenyl diphosphate = [GlcNAc-(1-&gt;4)-Mur2Ac(oyl-L-Ala-gamma-D-Glu-L-Lys-D-Ala-D-Ala)](n+1)-di-trans,octa-cis-undecaprenyl diphosphate + di-trans,octa-cis-undecaprenyl diphosphate + H(+). It participates in cell wall biogenesis; peptidoglycan biosynthesis. Functionally, peptidoglycan polymerase that is essential for cell division. The polypeptide is Probable peptidoglycan glycosyltransferase FtsW (Buchnera aphidicola subsp. Schizaphis graminum (strain Sg)).